We begin with the raw amino-acid sequence, 308 residues long: Cyclin-D2-1 (308 aa).

The interval 286 to 308 is disordered; it reads EGLSYDSSSPPPPKRRKRSPPGT. The span at 298–308 shows a compositional bias: basic residues; that stretch reads PKRRKRSPPGT.

This sequence belongs to the cyclin family. Cyclin D subfamily.

This Oryza sativa subsp. japonica (Rice) protein is Cyclin-D2-1 (CYCD2-1).